A 173-amino-acid polypeptide reads, in one-letter code: Probable F-box protein At1g27490 (173 aa).

The F-box domain maps to 1–46 (MEWSLPVDLQEEILSRVPAKSLARWKSTPKQWKGPISIEFLHLLRS).

The sequence is that of Probable F-box protein At1g27490 from Arabidopsis thaliana (Mouse-ear cress).